We begin with the raw amino-acid sequence, 108 residues long: UPF0060 membrane protein amb3269 (108 aa).

4 helical membrane passes run 4–24 (IPTYILAAFAEIGGCFAFWAW), 31–51 (PLWLVPGMASLGLFAWALTRI), 59–79 (AYAAYGGIYILASLIWMWAVE), and 85–105 (RWDTIGAAICVVGAMVIIFGP).

This sequence belongs to the UPF0060 family.

Its subcellular location is the cell inner membrane. The protein is UPF0060 membrane protein amb3269 of Paramagnetospirillum magneticum (strain ATCC 700264 / AMB-1) (Magnetospirillum magneticum).